The following is a 300-amino-acid chain: Pantothenate synthetase (300 aa).

30–37 (MGYLHEGH) is a binding site for ATP. The active-site Proton donor is the His37. Gln61 contacts (R)-pantoate. Residue Gln61 coordinates beta-alanine. 147–150 (GMKD) is a binding site for ATP. Residue Gln153 participates in (R)-pantoate binding. ATP-binding positions include Val176 and 184–187 (KSSR).

This sequence belongs to the pantothenate synthetase family. As to quaternary structure, homodimer.

Its subcellular location is the cytoplasm. It carries out the reaction (R)-pantoate + beta-alanine + ATP = (R)-pantothenate + AMP + diphosphate + H(+). The protein operates within cofactor biosynthesis; (R)-pantothenate biosynthesis; (R)-pantothenate from (R)-pantoate and beta-alanine: step 1/1. Its function is as follows. Catalyzes the condensation of pantoate with beta-alanine in an ATP-dependent reaction via a pantoyl-adenylate intermediate. This is Pantothenate synthetase from Geobacillus kaustophilus (strain HTA426).